Reading from the N-terminus, the 976-residue chain is Probable alanine--tRNA ligase, chloroplastic/mitochondrial (976 aa).

Residues 1–54 (MPRPGFAHATAPALAHARARISPVARRRVVVMRTRVDGAAKSLVTQLRLALGST) constitute a chloroplast and mitochondrion transit peptide. The tract at residues 71–95 (LGTATNDQSTGTRANPNAEGKDNSG) is disordered. A compositionally biased stretch (polar residues) spans 73–85 (TATNDQSTGTRAN).

The protein belongs to the class-II aminoacyl-tRNA synthetase family. As to quaternary structure, monomer. Zn(2+) is required as a cofactor.

It localises to the plastid. The protein resides in the chloroplast. The protein localises to the mitochondrion. The catalysed reaction is tRNA(Ala) + L-alanine + ATP = L-alanyl-tRNA(Ala) + AMP + diphosphate. Catalyzes the attachment of alanine to tRNA(Ala) in a two-step reaction: alanine is first activated by ATP to form Ala-AMP and then transferred to the acceptor end of tRNA(Ala). Also edits incorrectly charged tRNA(Ala) via its editing domain. The polypeptide is Probable alanine--tRNA ligase, chloroplastic/mitochondrial (Ostreococcus tauri).